Reading from the N-terminus, the 1500-residue chain is Myosin-8 (1500 aa).

One can recognise a Myosin N-terminal SH3-like domain in the interval 8–57 (AVGSHVWVEDPDEAWLDGEVVEINGDQIKVLCASGKQVVVKDSNIYPKDV). One can recognise a Myosin motor domain in the interval 62 to 732 (SGVEDMTRLA…QMADLDTRRT (671 aa)). ATP-binding positions include 156–163 (GESGAGKT) and 210–218 (NNNSSRFGK). Actin-binding stretches follow at residues 496–530 (LIEK…YQTY), 532–555 (NHKR…AGDV), 590–613 (FPPV…KQQL), and 613–635 (LVSL…KPNN). IQ domains follow at residues 735 to 764 (LGRS…SATQ), 758 to 787 (LRIS…EAAA), 783 to 812 (REAA…ATIL), 806 to 835 (LFSA…TKAA), 831 to 860 (QTKA…AAIT), and 854 to 883 (LKKA…AARE). The stretch at 884 to 1049 (TGALQEAKNK…TEKQIMLQQT (166 aa)) forms a coiled coil. In terms of domain architecture, Dilute spans 1146–1447 (DRLIEMIGSA…ISSMRALMTE (302 aa)).

This sequence belongs to the TRAFAC class myosin-kinesin ATPase superfamily. Myosin family. Plant myosin class XI subfamily. Homodimer.

It is found in the cytoplasm. Functionally, myosin heavy chain that is required for the cell cycle-regulated transport of various organelles and proteins for their segregation. Functions by binding with its tail domain to receptor proteins on organelles and exerting force with its N-terminal motor domain against actin filaments, thereby transporting its cargo along polarized actin cables. This chain is Myosin-8 (XI-B), found in Arabidopsis thaliana (Mouse-ear cress).